Consider the following 394-residue polypeptide: Phosphatidylinositol 4-phosphate 5-kinase-like protein 1 (394 aa).

Residues 36-393 (DKQSRLGLFE…RLCQWVEAHT (358 aa)) form the PIPK domain.

In terms of assembly, heterodimerizes with other type I phosphatidylinositol 4-phosphate 5-kinase.

It is found in the cytoplasm. Its subcellular location is the membrane. The catalysed reaction is a 1,2-diacyl-sn-glycero-3-phospho-(1D-myo-inositol 4-phosphate) + ATP = a 1,2-diacyl-sn-glycero-3-phospho-(1D-myo-inositol-4,5-bisphosphate) + ADP + H(+). Its function is as follows. May act as a scaffold to localize and regulate type I PI(4)P 5-kinases to specific compartments within the cell, where they generate PI(4,5)P2 for actin nucleation, signaling and scaffold protein recruitment and conversion to PI(3,4,5)P3. The polypeptide is Phosphatidylinositol 4-phosphate 5-kinase-like protein 1 (PIP5KL1) (Homo sapiens (Human)).